Consider the following 476-residue polypeptide: Glycogen synthase (476 aa).

Lysine 15 contacts ADP-alpha-D-glucose.

This sequence belongs to the glycosyltransferase 1 family. Bacterial/plant glycogen synthase subfamily.

The enzyme catalyses [(1-&gt;4)-alpha-D-glucosyl](n) + ADP-alpha-D-glucose = [(1-&gt;4)-alpha-D-glucosyl](n+1) + ADP + H(+). The protein operates within glycan biosynthesis; glycogen biosynthesis. Synthesizes alpha-1,4-glucan chains using ADP-glucose. The polypeptide is Glycogen synthase (Haemophilus influenzae (strain PittEE)).